Reading from the N-terminus, the 337-residue chain is Lipoyl synthase (337 aa).

Cysteine 81, cysteine 86, cysteine 92, cysteine 107, cysteine 111, cysteine 114, and serine 323 together coordinate [4Fe-4S] cluster. The 220-residue stretch at 93–312 (FSHGTATFMI…EDYGNALGFS (220 aa)) folds into the Radical SAM core domain.

Belongs to the radical SAM superfamily. Lipoyl synthase family. It depends on [4Fe-4S] cluster as a cofactor.

It localises to the cytoplasm. It catalyses the reaction [[Fe-S] cluster scaffold protein carrying a second [4Fe-4S](2+) cluster] + N(6)-octanoyl-L-lysyl-[protein] + 2 oxidized [2Fe-2S]-[ferredoxin] + 2 S-adenosyl-L-methionine + 4 H(+) = [[Fe-S] cluster scaffold protein] + N(6)-[(R)-dihydrolipoyl]-L-lysyl-[protein] + 4 Fe(3+) + 2 hydrogen sulfide + 2 5'-deoxyadenosine + 2 L-methionine + 2 reduced [2Fe-2S]-[ferredoxin]. The protein operates within protein modification; protein lipoylation via endogenous pathway; protein N(6)-(lipoyl)lysine from octanoyl-[acyl-carrier-protein]: step 2/2. Catalyzes the radical-mediated insertion of two sulfur atoms into the C-6 and C-8 positions of the octanoyl moiety bound to the lipoyl domains of lipoate-dependent enzymes, thereby converting the octanoylated domains into lipoylated derivatives. In Xanthomonas campestris pv. campestris (strain B100), this protein is Lipoyl synthase.